The following is a 328-amino-acid chain: POU domain, class 5, transcription factor 2 (328 aa).

Positions 1–25 (MAGHRPSNHFCPLPGSGGGGPRGPM) are disordered. The POU-specific domain occupies 118-192 (DISGILKELQ…LLKKWLKEVE (75 aa)). A DNA-binding region (homeobox) is located at residues 210–269 (GKWRRASRERRIGNSLEKFFQRCPKPTPQQISHIAGCLQLQKDVVRVWFYNRSKMGSRPT).

It belongs to the POU transcription factor family. Class-5 subfamily. Expressed in skeletal and cardiac muscles, brain, heart and lung. Little or no detectable expression found in pancreas, kidney, liver or placenta.

Its subcellular location is the nucleus. Its function is as follows. Transcription factor that binds preferentially to the octamer motif (5'-ATGTTAAT-3'). May exert a regulatory function in meiotic events that are required for terminal differentiation of male germ cell. The sequence is that of POU domain, class 5, transcription factor 2 (POU5F2) from Homo sapiens (Human).